Here is a 1438-residue protein sequence, read N- to C-terminus: DNA polymerase III PolC-type (1438 aa).

The 157-residue stretch at 422–578 folds into the Exonuclease domain; that stretch reads YVVFDVETTG…YDTEATAYMF (157 aa).

The protein belongs to the DNA polymerase type-C family. PolC subfamily.

The protein localises to the cytoplasm. It carries out the reaction DNA(n) + a 2'-deoxyribonucleoside 5'-triphosphate = DNA(n+1) + diphosphate. Required for replicative DNA synthesis. This DNA polymerase also exhibits 3' to 5' exonuclease activity. This chain is DNA polymerase III PolC-type, found in Staphylococcus saprophyticus subsp. saprophyticus (strain ATCC 15305 / DSM 20229 / NCIMB 8711 / NCTC 7292 / S-41).